Here is a 414-residue protein sequence, read N- to C-terminus: Isocitrate dehydrogenase [NADP] cytoplasmic (414 aa).

Residue S2 is modified to N-acetylserine. The residue at position 42 (Y42) is a Phosphotyrosine. 75–77 (TIT) lines the NADP(+) pocket. Position 77 (T77) interacts with substrate. K81 bears the N6-acetyllysine mark. R82 serves as a coordination point for NADP(+). Residues 94–100 (SPNGTIR) and R109 each bind substrate. The residue at position 126 (K126) is an N6-succinyllysine. Substrate-binding residues include R132 and K212. N6-acetyllysine occurs at positions 224, 233, and 243. D252 contributes to the Mn(2+) binding site. NADP(+) is bound at residue K260. Residues D275 and D279 each contribute to the Mn(2+) site. 310–315 (GTVTRH) serves as a coordination point for NADP(+). N6-acetyllysine is present on K321. Position 328 (N328) interacts with NADP(+). The residue at position 389 (S389) is a Phosphoserine. K400 carries the post-translational modification N6-succinyllysine.

The protein belongs to the isocitrate and isopropylmalate dehydrogenases family. As to quaternary structure, homodimer. Mg(2+) is required as a cofactor. Mn(2+) serves as cofactor. Acetylation at Lys-374 dramatically reduces catalytic activity.

Its subcellular location is the cytoplasm. It is found in the cytosol. The catalysed reaction is D-threo-isocitrate + NADP(+) = 2-oxoglutarate + CO2 + NADPH. Catalyzes the NADP(+)-dependent oxidative decarboxylation of isocitrate (D-threo-isocitrate) to 2-ketoglutarate (2-oxoglutarate), which is required by other enzymes such as the phytanoyl-CoA dioxygenase. Plays a critical role in the generation of NADPH, an important cofactor in many biosynthesis pathways. May act as a corneal epithelial crystallin and may be involved in maintaining corneal epithelial transparency. The polypeptide is Isocitrate dehydrogenase [NADP] cytoplasmic (IDH1) (Microtus mexicanus (Mexican vole)).